The primary structure comprises 491 residues: MLAMEKEFDSKLVLQGNSSNGANVSRSKSFSFKAPQENFTSHDFEFGKIYGVGSYSKVVRAKKKETGTVYALKIMDKKFITKENKTAYVKLERIVLDQLEHPGIIKLYFTFQDTSSLYMALESCEGGELFDQITRKGRLSEDEARFYTAEVVDALEYIHSMGLIHRDIKPENLLLTSDGHIKIADFGSVKPMQDSQITVLPNAASDDKACTFVGTAAYVPPEVLNSSPATFGNDLWALGCTLYQMLSGTSPFKDASEWLIFQRIIARDIKFPNHFSEAARDLIDRLLDTEPSRRPGAGSEGYVALKRHPFFNGVDWKNLRSQTPPKLAPDPASQTASPERDDTHGSPWNLTHIGDSLATQNEGHSAPPTSSESSGSITRLASIDSFDSRWQQFLEPGESVLMISAVKKLQKITSKKVQLILTNKPKLIYVDPSKLVVKGNIIWSDNSNDLNVVVTSPSHFKICTPKKVLSFEDAKQRASVWKKAIETLQNR.

In terms of domain architecture, Protein kinase spans 44-311 (FEFGKIYGVG…YVALKRHPFF (268 aa)). ATP is bound by residues 54-56 (SYS) and lysine 73. The PIF-pocket stretch occupies residues 75 to 119 (MDKKFITKENKTAYVKLERIVLDQLEHPGIIKLYFTFQDTSSLYM). A PIF-binding region spans residues 77–112 (KKFITKENKTAYVKLERIVLDQLEHPGIIKLYFTFQ). Residues 122–124 (ESC) and glutamate 128 each bind ATP. Aspartate 167 functions as the Proton acceptor in the catalytic mechanism. Glutamate 171 lines the ATP pocket. Serine 177 carries the post-translational modification Phosphoserine. Aspartate 185 contacts ATP. The interval 185–222 (DFGSVKPMQDSQITVLPNAASDDKACTFVGTAAYVPPE) is activation loop. Threonine 211 bears the Phosphothreonine; by autocatalysis mark. Serine 276 and serine 337 each carry phosphoserine. Positions 321 to 377 (SQTPPKLAPDPASQTASPERDDTHGSPWNLTHIGDSLATQNEGHSAPPTSSESSGSI) are disordered. A compositionally biased stretch (low complexity) spans 365-376 (SAPPTSSESSGS). Serine 382 is subject to Phosphoserine. The region spanning 386 to 491 (FDSRWQQFLE…KKAIETLQNR (106 aa)) is the PH domain.

The protein belongs to the protein kinase superfamily. AGC Ser/Thr protein kinase family. PDPK1 subfamily. Interacts with AGC1-5 and AGC1-7. Interacts with the C-terminal PIF domain of the protein kinases D6PK/AGC1-1, OXI1/AGC2-1 and PID. In terms of processing, phosphorylation on Thr-211 in the activation loop is required for full activity. PDK1 itself can autophosphorylate Thr-211, leading to its own activation. In terms of tissue distribution, ubiquitous.

Its subcellular location is the cytoplasm. It is found in the membrane. The enzyme catalyses L-seryl-[protein] + ATP = O-phospho-L-seryl-[protein] + ADP + H(+). The catalysed reaction is L-threonyl-[protein] + ATP = O-phospho-L-threonyl-[protein] + ADP + H(+). With respect to regulation, activated by phosphatidic acid (PA) and in response to the fungal elicitor xylanase. May couple lipid signals to the activation-loop phosphorylation of several protein kinases of the so-called AGC kinase family. Interacts via its pleckstrin homology domain with phosphatidic acid, PtdIns3P and PtdIns(3,4)P2 and to a lesser extent with PtdIns(4,5)P2 and PtdIns4P. May play a general role in signaling processes controlling the pathogen/stress response, polar auxin transport and development. Transphosphorylates the AGC protein kinases OXI1/AGC2-1, PK1/S6K1, PK19/S6K2 and PID resulting in their activation. The protein is 3-phosphoinositide-dependent protein kinase 1 (PDPK1) of Arabidopsis thaliana (Mouse-ear cress).